The following is a 94-amino-acid chain: Small ribosomal subunit protein uS19 (94 aa).

Belongs to the universal ribosomal protein uS19 family.

Its function is as follows. Protein S19 forms a complex with S13 that binds strongly to the 16S ribosomal RNA. The sequence is that of Small ribosomal subunit protein uS19 from Wolbachia pipientis subsp. Culex pipiens (strain wPip).